Reading from the N-terminus, the 196-residue chain is SAGA-associated factor 11 homolog (196 aa).

An SGF11-type zinc finger spans residues 102–123 (CTCPNCDRLVAAARFAPHLEKC). A disordered region spans residues 140 to 196 (TKEGTSASSNSSYVHSGANAGGTDDEDDVDWSSDKRKKKSTQNSRNNGSKKNNGKTF). Residues 142–153 (EGTSASSNSSYV) are compositionally biased toward polar residues. Ser172 bears the Phosphoserine mark. Positions 182 to 196 (NSRNNGSKKNNGKTF) are enriched in low complexity.

It belongs to the SGF11 family. Component of some SAGA transcription coactivator-HAT complexes, at least composed of Ada2b, not/nonstop, Pcaf/Gcn5, Sgf11 and Spt3. Within the SAGA complex, Sgf11, e(y)2, and not/nonstop form an additional subcomplex of SAGA called the DUB module (deubiquitination module). Interacts directly with not/nonstop. Interacts with the AMEX complex component xmas-2. Interacts with Cbp80; important for promoter recruitment of Sgf11 that is not associated with the DUB module.

It localises to the nucleus. The protein resides in the nucleoplasm. It is found in the cytoplasm. Its function is as follows. Component of the transcription regulatory histone acetylation (HAT) complex SAGA, a multiprotein complex that activates transcription by remodeling chromatin and mediating histone acetylation and deubiquitination. Within the SAGA complex, participates in a subcomplex that specifically deubiquitinates histone H2B. The SAGA complex is recruited to specific gene promoters by activators, where it is required for transcription. Required for nuclear receptor-mediated transactivation. Binds independently on SAGA to promoters in an RNA-dependent manner. Binds to mRNA and is essential for total mRNA export from the nucleus. Required to counteract heterochromatin silencing. Controls the development of neuronal connectivity in visual system by being required for accurate axon targeting in the optic lobe. Required for expression of ecdysone-induced genes such as br/broad. The protein is SAGA-associated factor 11 homolog of Drosophila persimilis (Fruit fly).